The primary structure comprises 509 residues: Probable cytosol aminopeptidase (509 aa).

2 residues coordinate Mn(2+): lysine 277 and aspartate 282. Residue lysine 289 is part of the active site. Residues aspartate 300, aspartate 359, and glutamate 361 each coordinate Mn(2+). Arginine 363 is a catalytic residue.

Belongs to the peptidase M17 family. Mn(2+) is required as a cofactor.

It is found in the cytoplasm. The catalysed reaction is Release of an N-terminal amino acid, Xaa-|-Yaa-, in which Xaa is preferably Leu, but may be other amino acids including Pro although not Arg or Lys, and Yaa may be Pro. Amino acid amides and methyl esters are also readily hydrolyzed, but rates on arylamides are exceedingly low.. It carries out the reaction Release of an N-terminal amino acid, preferentially leucine, but not glutamic or aspartic acids.. Its function is as follows. Presumably involved in the processing and regular turnover of intracellular proteins. Catalyzes the removal of unsubstituted N-terminal amino acids from various peptides. The protein is Probable cytosol aminopeptidase of Chloroherpeton thalassium (strain ATCC 35110 / GB-78).